Reading from the N-terminus, the 133-residue chain is Aspartate 1-decarboxylase (133 aa).

Ser26 functions as the Schiff-base intermediate with substrate; via pyruvic acid in the catalytic mechanism. Ser26 is modified (pyruvic acid (Ser)). Residue Thr58 coordinates substrate. Tyr59 (proton donor) is an active-site residue. 74–76 (GAA) is a binding site for substrate.

It belongs to the PanD family. In terms of assembly, heterooctamer of four alpha and four beta subunits. Requires pyruvate as cofactor. Is synthesized initially as an inactive proenzyme, which is activated by self-cleavage at a specific serine bond to produce a beta-subunit with a hydroxyl group at its C-terminus and an alpha-subunit with a pyruvoyl group at its N-terminus.

Its subcellular location is the cytoplasm. It catalyses the reaction L-aspartate + H(+) = beta-alanine + CO2. Its pathway is cofactor biosynthesis; (R)-pantothenate biosynthesis; beta-alanine from L-aspartate: step 1/1. In terms of biological role, catalyzes the pyruvoyl-dependent decarboxylation of aspartate to produce beta-alanine. The chain is Aspartate 1-decarboxylase from Legionella pneumophila (strain Lens).